The following is a 302-amino-acid chain: N-acetyl-D-glucosamine kinase (302 aa).

Residues 4-11 (GFDVGGTK) and 133-140 (GFGGGLVF) contribute to the ATP site. Histidine 157, cysteine 177, cysteine 179, and cysteine 184 together coordinate Zn(2+).

This sequence belongs to the ROK (NagC/XylR) family. NagK subfamily.

It carries out the reaction N-acetyl-D-glucosamine + ATP = N-acetyl-D-glucosamine 6-phosphate + ADP + H(+). It participates in cell wall biogenesis; peptidoglycan recycling. Its function is as follows. Catalyzes the phosphorylation of N-acetyl-D-glucosamine (GlcNAc) derived from cell-wall degradation, yielding GlcNAc-6-P. This is N-acetyl-D-glucosamine kinase from Aliivibrio salmonicida (strain LFI1238) (Vibrio salmonicida (strain LFI1238)).